Here is a 94-residue protein sequence, read N- to C-terminus: Large ribosomal subunit protein bL27 (94 aa).

Residues Met1 to Phe9 constitute a propeptide that is removed on maturation. The interval His11–Ala33 is disordered.

Belongs to the bacterial ribosomal protein bL27 family. Post-translationally, the N-terminus is cleaved by ribosomal processing cysteine protease Prp.

This chain is Large ribosomal subunit protein bL27, found in Streptococcus agalactiae serotype V (strain ATCC BAA-611 / 2603 V/R).